The sequence spans 432 residues: MADIIIKNAYVLTMDPDAGDIKKGTVVIEDGKITEIGVKTKESADTVIDAKGSVVMPGLVNTHTHAAMTLFRGYADDLQLAEWLEKHIWPAEAQLTAEDVYRGSLLACLEMIRSGTTSFADMYFFMDETAKAVEASGLRASLSHGLIELWNEEKGENDLKEGKRFVRAWQGAAKGRIKTMYGPHAPNTCSDEFLAKVKEAARQDGAGLHIHVLETEAELLAMKERYGKCSVHMLDDIGFFGPDVLAAHCVWLSDGDIEVLREKGVNVSHNPISNMKLASGTAPVYKMLERGVNVSLGTDGCASNNNLDLFEEMKTAALLHKLSTCNPTALPARQVLQMATVNGAKALGTETGMLKTGMKADMIIVDMKKPHLTPCFDVPSHLVYSAGGSDVRTTIVDGKILMQDYRVMVLDEQKVIEEAQKAAEELVARVNS.

The Zn(2+) site is built by His63 and His65. Glu92 and His184 together coordinate substrate. His211 is a Zn(2+) binding site. Residues Glu214 and Asp299 each coordinate substrate. Asp299 contributes to the Zn(2+) binding site.

The protein belongs to the metallo-dependent hydrolases superfamily. MTA/SAH deaminase family. As to quaternary structure, homotetramer. The cofactor is Zn(2+).

The catalysed reaction is 5'-deoxyadenosine + H2O + H(+) = 5'-deoxyinosine + NH4(+). It carries out the reaction S-adenosyl-L-homocysteine + H2O + H(+) = S-inosyl-L-homocysteine + NH4(+). The enzyme catalyses S-methyl-5'-thioadenosine + H2O + H(+) = S-methyl-5'-thioinosine + NH4(+). It catalyses the reaction adenosine + H2O + H(+) = inosine + NH4(+). Its pathway is amino-acid biosynthesis; S-adenosyl-L-methionine biosynthesis. In terms of biological role, catalyzes the deamination of three SAM-derived enzymatic products, namely 5'-deoxyadenosine, S-adenosyl-L-homocysteine, and 5'-methylthioadenosine, to produce the inosine analogs. Can also deaminate adenosine. The preferred substrate for this enzyme is 5'-deoxyadenosine, but all these substrates are efficiently deaminated. Likely functions in a S-adenosyl-L-methionine (SAM) recycling pathway from S-adenosyl-L-homocysteine (SAH) produced from SAM-dependent methylation reactions. May also be involved in the recycling of 5'-deoxyadenosine, whereupon the 5'-deoxyribose moiety of 5'-deoxyinosine is further metabolized to deoxyhexoses used for the biosynthesis of aromatic amino acids in methanogens. The chain is 5'-deoxyadenosine deaminase from Methanosarcina mazei (strain ATCC BAA-159 / DSM 3647 / Goe1 / Go1 / JCM 11833 / OCM 88) (Methanosarcina frisia).